Consider the following 310-residue polypeptide: Olfactory receptor 10N1 (310 aa).

The Extracellular portion of the chain corresponds to 1-23 (MDNYTLLNEFILLGIPQTQGLET). A glycan (N-linked (GlcNAc...) asparagine) is linked at N3. The helical transmembrane segment at 24-44 (LLFVVFLFIYFFTLLGNSLIF) threads the bilayer. The Cytoplasmic segment spans residues 45–55 (TAIISSSTLHT). A helical transmembrane segment spans residues 56–76 (PMYFFLGLLSVFDMLFPSVTC). The Extracellular portion of the chain corresponds to 77–95 (PKMLFYLSVRSPAISYKGC). C95 and C187 are disulfide-bonded. Residues 96-116 (AAQLFFYHLLGSTEGCLYSVM) form a helical membrane-spanning segment. Residues 117-136 (AYDRYVAICHPLRYMLIMKP) are Cytoplasmic-facing. A helical transmembrane segment spans residues 137–157 (GVCVSLVIIAWLVGCLHATIL). Residues 158–202 (TSLTFQLVYCASNQVDYFFCDLPAVLPLACTDSKLARKVGSINVG) are Extracellular-facing. A helical transmembrane segment spans residues 203-223 (FLALMLLFSVCVSYVHIGVAI). The Cytoplasmic segment spans residues 224 to 237 (LRIRSAEGRQKAFS). A helical transmembrane segment spans residues 238 to 258 (TCSAHLTAILCAYGPVIIIYL). Over 259 to 264 (QRTPNP) the chain is Extracellular. A helical membrane pass occupies residues 265–285 (LLGAVVQILNNIVSPMLNSLI). Topologically, residues 286–310 (YSLRNKEVKRSLRRVFQNITFHGQK) are cytoplasmic.

It belongs to the G-protein coupled receptor 1 family.

It localises to the cell membrane. In terms of biological role, odorant receptor. The polypeptide is Olfactory receptor 10N1 (Mus musculus (Mouse)).